The primary structure comprises 210 residues: N-(5'-phosphoribosyl)anthranilate isomerase (210 aa).

It belongs to the TrpF family.

The catalysed reaction is N-(5-phospho-beta-D-ribosyl)anthranilate = 1-(2-carboxyphenylamino)-1-deoxy-D-ribulose 5-phosphate. Its pathway is amino-acid biosynthesis; L-tryptophan biosynthesis; L-tryptophan from chorismate: step 3/5. The chain is N-(5'-phosphoribosyl)anthranilate isomerase from Staphylococcus aureus (strain MRSA252).